The following is a 269-amino-acid chain: Shikimate dehydrogenase (NADP(+)) (269 aa).

Residues 22–24 and threonine 68 each bind shikimate; that span reads TLS. Catalysis depends on lysine 72, which acts as the Proton acceptor. Shikimate-binding residues include asparagine 93 and aspartate 104. NADP(+)-binding positions include 128 to 132, 152 to 157, and phenylalanine 210; these read GAGGA and NRTNLR. Tyrosine 212 is a binding site for shikimate. Glycine 233 serves as a coordination point for NADP(+).

Belongs to the shikimate dehydrogenase family. Homodimer.

It carries out the reaction shikimate + NADP(+) = 3-dehydroshikimate + NADPH + H(+). It participates in metabolic intermediate biosynthesis; chorismate biosynthesis; chorismate from D-erythrose 4-phosphate and phosphoenolpyruvate: step 4/7. Involved in the biosynthesis of the chorismate, which leads to the biosynthesis of aromatic amino acids. Catalyzes the reversible NADPH linked reduction of 3-dehydroshikimate (DHSA) to yield shikimate (SA). The chain is Shikimate dehydrogenase (NADP(+)) from Saccharolobus islandicus (strain Y.N.15.51 / Yellowstone #2) (Sulfolobus islandicus).